The chain runs to 229 residues: Phosphoglycolate phosphatase (229 aa).

Catalysis depends on Asp-18, which acts as the Nucleophile. Residues Asp-18, Asp-20, and Asp-176 each contribute to the Mg(2+) site.

This sequence belongs to the HAD-like hydrolase superfamily. CbbY/CbbZ/Gph/YieH family. Mg(2+) is required as a cofactor.

It catalyses the reaction 2-phosphoglycolate + H2O = glycolate + phosphate. The protein operates within organic acid metabolism; glycolate biosynthesis; glycolate from 2-phosphoglycolate: step 1/1. Functionally, specifically catalyzes the dephosphorylation of 2-phosphoglycolate. Is involved in the dissimilation of the intracellular 2-phosphoglycolate formed during the DNA repair of 3'-phosphoglycolate ends, a major class of DNA lesions induced by oxidative stress. This chain is Phosphoglycolate phosphatase, found in Xylella fastidiosa (strain Temecula1 / ATCC 700964).